A 35-amino-acid chain; its full sequence is Cecropin-A (35 aa).

At Leu-35 the chain carries Leucine amide.

Monomer. In terms of tissue distribution, hemolymph.

It is found in the secreted. Functionally, cecropins have lytic and antibacterial activity against several Gram-positive and Gram-negative bacteria. Also has activity against fungi. This is Cecropin-A from Heliothis virescens (Tobacco budworm moth).